Here is a 553-residue protein sequence, read N- to C-terminus: Efflux pump mlcE (553 aa).

Residues 1–19 (MSEPLPPKEGEPRPQKEES) are compositionally biased toward basic and acidic residues. Residues 1–29 (MSEPLPPKEGEPRPQKEESQNDTLEATES) are disordered. Asn21 carries N-linked (GlcNAc...) asparagine glycosylation. 13 helical membrane passes run 41-61 (LVVASVTFVAFLMLLDMSIIV), 77-96 (VGWYGSAYLLANCALQPLAG), 101-121 (LLGLKYTFFAFLCIFELGSVL), 136-156 (AVAGMGGSGLVNGALTILSTA), 164-184 (VLIGVMMGLSQIAIVCGPLLG), 196-216 (CFYINLPIGAVAAFLLLVITI), 245-265 (LVGFVVFAAFATMISLALEWG), 273-293 (SSVIIGLFCGGGFALIAFVLW), 319-339 (LFMGFFSGSLLVFSYYLPIYF), 352-372 (VYMLPGILGQVIMAMVSGFAI), 376-396 (GYYLPWALGSAVLVAIGAGLV), 440-460 (ALGISLAVFGQTFGGSLFLDF), and 516-536 (TFYLAVGATACTFVFAFGMGW). N-linked (GlcNAc...) asparagine glycosylation is present at Asn543.

The protein belongs to the major facilitator superfamily. TCR/Tet family.

Its subcellular location is the membrane. Functionally, efflux pump; part of the gene cluster that mediates the biosynthesis of compactin, also known as mevastatin or ML-236B, and which acts as a potent competitive inhibitor of HMG-CoA reductase. The protein is Efflux pump mlcE of Penicillium citrinum.